The primary structure comprises 191 residues: Cell division protein SepF (191 aa).

Residues 150–164 are compositionally biased toward low complexity; sequence TSSSPEEASPSSVST. A disordered region spans residues 150 to 191; sequence TSSSPEEASPSSVSTENTPQYSLGKNTTPEPAWGNSKLSAYS. Residues 165-178 are compositionally biased toward polar residues; that stretch reads ENTPQYSLGKNTTP.

It belongs to the SepF family. Homodimer. Interacts with FtsZ.

The protein resides in the cytoplasm. In terms of biological role, cell division protein that is part of the divisome complex and is recruited early to the Z-ring. Probably stimulates Z-ring formation, perhaps through the cross-linking of FtsZ protofilaments. Its function overlaps with FtsA. This chain is Cell division protein SepF, found in Prochlorococcus marinus (strain AS9601).